Consider the following 545-residue polypeptide: CTP synthase (545 aa).

Residues 1–266 (MATNYIFVTG…DSFVCDRFRL (266 aa)) form an amidoligase domain region. S14 contributes to the CTP binding site. UTP is bound at residue S14. Residues 15–20 (SLGKGI) and D72 each bind ATP. Residues D72 and E140 each contribute to the Mg(2+) site. Residues 147–149 (DIE), 187–192 (KTKPTQ), and K223 contribute to the CTP site. UTP contacts are provided by residues 187 to 192 (KTKPTQ) and K223. 239 to 241 (KDV) provides a ligand contact to ATP. Positions 291 to 542 (TIGMVGKYVE…VAAAKAYQDS (252 aa)) constitute a Glutamine amidotransferase type-1 domain. Position 352 (G352) interacts with L-glutamine. The Nucleophile; for glutamine hydrolysis role is filled by C379. L-glutamine is bound by residues 380-383 (LGMQ), E403, and R470. Residues H515 and E517 contribute to the active site.

The protein belongs to the CTP synthase family. As to quaternary structure, homotetramer.

It catalyses the reaction UTP + L-glutamine + ATP + H2O = CTP + L-glutamate + ADP + phosphate + 2 H(+). It carries out the reaction L-glutamine + H2O = L-glutamate + NH4(+). The catalysed reaction is UTP + NH4(+) + ATP = CTP + ADP + phosphate + 2 H(+). The protein operates within pyrimidine metabolism; CTP biosynthesis via de novo pathway; CTP from UDP: step 2/2. Its activity is regulated as follows. Allosterically activated by GTP, when glutamine is the substrate; GTP has no effect on the reaction when ammonia is the substrate. The allosteric effector GTP functions by stabilizing the protein conformation that binds the tetrahedral intermediate(s) formed during glutamine hydrolysis. Inhibited by the product CTP, via allosteric rather than competitive inhibition. In terms of biological role, catalyzes the ATP-dependent amination of UTP to CTP with either L-glutamine or ammonia as the source of nitrogen. Regulates intracellular CTP levels through interactions with the four ribonucleotide triphosphates. The chain is CTP synthase from Haemophilus ducreyi (strain 35000HP / ATCC 700724).